The chain runs to 334 residues: Holliday junction branch migration complex subunit RuvB (334 aa).

The tract at residues 1-182 (MDERLVSSEA…FGVLSRLEYY (182 aa)) is large ATPase domain (RuvB-L). Residues Leu-21, Arg-22, Gly-63, Lys-66, Thr-67, Thr-68, 129 to 131 (EDF), Arg-172, Tyr-182, and Arg-219 contribute to the ATP site. Thr-67 serves as a coordination point for Mg(2+). The small ATPAse domain (RuvB-S) stretch occupies residues 183 to 253 (TQEELTDIVS…IAHDALERLQ (71 aa)). Residues 256 to 334 (ALGLDHIDHK…HFRLEAPARD (79 aa)) form a head domain (RuvB-H) region. DNA contacts are provided by Arg-311 and Arg-316.

It belongs to the RuvB family. In terms of assembly, homohexamer. Forms an RuvA(8)-RuvB(12)-Holliday junction (HJ) complex. HJ DNA is sandwiched between 2 RuvA tetramers; dsDNA enters through RuvA and exits via RuvB. An RuvB hexamer assembles on each DNA strand where it exits the tetramer. Each RuvB hexamer is contacted by two RuvA subunits (via domain III) on 2 adjacent RuvB subunits; this complex drives branch migration. In the full resolvosome a probable DNA-RuvA(4)-RuvB(12)-RuvC(2) complex forms which resolves the HJ.

Its subcellular location is the cytoplasm. It catalyses the reaction ATP + H2O = ADP + phosphate + H(+). Its function is as follows. The RuvA-RuvB-RuvC complex processes Holliday junction (HJ) DNA during genetic recombination and DNA repair, while the RuvA-RuvB complex plays an important role in the rescue of blocked DNA replication forks via replication fork reversal (RFR). RuvA specifically binds to HJ cruciform DNA, conferring on it an open structure. The RuvB hexamer acts as an ATP-dependent pump, pulling dsDNA into and through the RuvAB complex. RuvB forms 2 homohexamers on either side of HJ DNA bound by 1 or 2 RuvA tetramers; 4 subunits per hexamer contact DNA at a time. Coordinated motions by a converter formed by DNA-disengaged RuvB subunits stimulates ATP hydrolysis and nucleotide exchange. Immobilization of the converter enables RuvB to convert the ATP-contained energy into a lever motion, pulling 2 nucleotides of DNA out of the RuvA tetramer per ATP hydrolyzed, thus driving DNA branch migration. The RuvB motors rotate together with the DNA substrate, which together with the progressing nucleotide cycle form the mechanistic basis for DNA recombination by continuous HJ branch migration. Branch migration allows RuvC to scan DNA until it finds its consensus sequence, where it cleaves and resolves cruciform DNA. The chain is Holliday junction branch migration complex subunit RuvB from Bacillus velezensis (strain DSM 23117 / BGSC 10A6 / LMG 26770 / FZB42) (Bacillus amyloliquefaciens subsp. plantarum).